Reading from the N-terminus, the 240-residue chain is T-cell antigen CD7 (240 aa).

The N-terminal stretch at 1 to 25 (MAGPPRLLLLPLLLALARGLPGALA) is a signal peptide. One can recognise an Ig-like domain in the interval 26 to 130 (AQEVQQSPHC…NVYGSGTLVL (105 aa)). The Extracellular segment spans residues 26-180 (AQEVQQSPHC…PDPPAASALP (155 aa)). Intrachain disulfides connect C35–C142 and C48–C114. N-linked (GlcNAc...) asparagine glycosylation is found at N45 and N96. Residues 140-172 (HRCSDAPPRASALPAPPTGSALPDPQTASALPD) are disordered. A run of 4 repeats spans residues 145 to 153 (APPRASALP), 154 to 162 (APPTGSALP), 163 to 171 (DPQTASALP), and 172 to 180 (DPPAASALP). The 4 X 9 AA tandem repeats, potential spacer function stretch occupies residues 145 to 180 (APPRASALPAPPTGSALPDPQTASALPDPPAASALP). Residues 181-201 (AALAVISFLLGLGLGVACVLA) form a helical membrane-spanning segment. The S-palmitoyl cysteine moiety is linked to residue C198. The Cytoplasmic portion of the chain corresponds to 202 to 240 (RTQIKKLCSWRDKNSAACVVYEDMSHSRCNTLSSPNQYQ).

As to quaternary structure, interacts with SECTM1. Expressed on T-cells and natural killer (NK) cells and their precursors.

The protein resides in the membrane. In terms of biological role, transmembrane glycoprotein expressed by T-cells and natural killer (NK) cells and their precursors. Plays a costimulatory role in T-cell activation upon binding to its ligand K12/SECTM1. In turn, mediates the production of cytokines such as IL-2. On resting NK-cells, CD7 activation results in a significant induction of interferon-gamma levels. The sequence is that of T-cell antigen CD7 (CD7) from Homo sapiens (Human).